The sequence spans 602 residues: MLHFTAATSRFRLGRERANSVRSDGGWGVLQPVSATFNPPLRGWQRRALVQYLGTQPRDFLAVATPGSGKTSFALRIAAELLRYHTVEQVTVVVPTEHLKVQWAHAAAAHGLSLDPKFANSNPQTSPEYHGVMVTYAQVASHPTLHRVRTEARKTLVVFDEIHHGGDAKTWGDAIREAFGDATRRLALTGTPFRSDDSPIPFVSYQPDADGVLRSQADHTYGYAEALADGVVRPVVFLAYSGQARWRDSAGEEYEARLGEPLSAEQTARAWRTALDPEGEWMPAVITAADRRLRQLRAHVPDAGGMIIASDRTTARAYARLLTTMTAEEPTVVLSDDPGSSARITEFAQGTGRWLVAVRMVSEGVDVPRLSVGVYATNASTPLFFAQAIGRFVRSRRPGETASIFVPSVPNLLQLASALEVQRNHVLGRPHRESAHDPLDGDPATRTQTERGGAERGFTALGADAELDQVIFDGSSFGTATPTGSDEEADYLGIPGLLDAEQMRALLHRRQDEQLRKRAQLQKGATQPATSGASASVHGQLRDLRRELHTLVSIAHHRTGKPHGWIHDELRRRCGGPPIAAATRAQIKARIDALRQLNSERS.

The Helicase ATP-binding domain maps to Gln-51–Asp-210. Over residues Pro-430 to Leu-439 the composition is skewed to basic and acidic residues. Disordered stretches follow at residues Pro-430–Gly-452 and Arg-518–His-538. Residues Lys-523–Ser-534 are compositionally biased toward polar residues.

This sequence to M.leprae ML1624.

This is an uncharacterized protein from Mycobacterium tuberculosis (strain CDC 1551 / Oshkosh).